The chain runs to 487 residues: Kynureninase 1 (487 aa).

Residues Leu147, Thr148, 175 to 178 (FPSD), Ser232, Asp261, His264, and Tyr286 each bind pyridoxal 5'-phosphate. Lys287 carries the N6-(pyridoxal phosphate)lysine modification. Pyridoxal 5'-phosphate-binding residues include Trp327 and Asn355.

It belongs to the kynureninase family. In terms of assembly, homodimer. It depends on pyridoxal 5'-phosphate as a cofactor.

Its subcellular location is the cytoplasm. It carries out the reaction L-kynurenine + H2O = anthranilate + L-alanine + H(+). It catalyses the reaction 3-hydroxy-L-kynurenine + H2O = 3-hydroxyanthranilate + L-alanine + H(+). Its pathway is amino-acid degradation; L-kynurenine degradation; L-alanine and anthranilate from L-kynurenine: step 1/1. The protein operates within cofactor biosynthesis; NAD(+) biosynthesis; quinolinate from L-kynurenine: step 2/3. Its function is as follows. Catalyzes the cleavage of L-kynurenine (L-Kyn) and L-3-hydroxykynurenine (L-3OHKyn) into anthranilic acid (AA) and 3-hydroxyanthranilic acid (3-OHAA), respectively. The polypeptide is Kynureninase 1 (bna5-1) (Aspergillus oryzae (strain ATCC 42149 / RIB 40) (Yellow koji mold)).